Reading from the N-terminus, the 380-residue chain is Lipid-A-disaccharide synthase (380 aa).

Belongs to the LpxB family.

It carries out the reaction a lipid X + a UDP-2-N,3-O-bis[(3R)-3-hydroxyacyl]-alpha-D-glucosamine = a lipid A disaccharide + UDP + H(+). It participates in bacterial outer membrane biogenesis; LPS lipid A biosynthesis. In terms of biological role, condensation of UDP-2,3-diacylglucosamine and 2,3-diacylglucosamine-1-phosphate to form lipid A disaccharide, a precursor of lipid A, a phosphorylated glycolipid that anchors the lipopolysaccharide to the outer membrane of the cell. This chain is Lipid-A-disaccharide synthase, found in Pseudomonas syringae pv. syringae (strain B728a).